We begin with the raw amino-acid sequence, 230 residues long: Large ribosomal subunit protein uL3 (230 aa).

2 disordered regions span residues 125 to 149 (QAIG…SLGD) and 210 to 230 (PNPK…VKNE).

It belongs to the universal ribosomal protein uL3 family. In terms of assembly, part of the 50S ribosomal subunit. Forms a cluster with proteins L14 and L19.

One of the primary rRNA binding proteins, it binds directly near the 3'-end of the 23S rRNA, where it nucleates assembly of the 50S subunit. This Mesomycoplasma hyopneumoniae (strain J / ATCC 25934 / NCTC 10110) (Mycoplasma hyopneumoniae) protein is Large ribosomal subunit protein uL3.